A 26-amino-acid polypeptide reads, in one-letter code: FLPLLILGSLLMTPPVIQAIHDAQRG.

Arginine 25 is modified (arginine amide; in delta-paraponeritoxin-Pc1a).

In terms of processing, the glycine-PoTx is a non-amidated form of poneratoxin, with an extra-Gly at C-terminus. This loss of amidation does not alter toxin activity on Nav1.7/SCN9A. As to expression, expressed by the venom gland.

Its subcellular location is the secreted. Toxin that causes pain in vertebrates by targeting tetrodotoxin (TTX)-sensitive sodium channels in peripheral sensory neurons. Also blocks synaptic transmission and stimulates smooth muscle contraction. Converts the normally rapidly activating and inactivating sodium channel current into one that does not inactivate. Is active on both Nav1.6/SCN8A and Nav1.7/SCN9A sodium channels, with a much potent activity on Nav1.6/SCN8A (EC(50)=97 nM on human channels) than on Nav1.7/SCN9A (EC(50)=2.3 uM on human and EC(50)=1.8 uM on mouse channels). On these channels, causes a sustained current, a reduction in peak current amplitude and a hyperpolarising shift. Modulates Nav1.7/SCN9A in a non-competitive manner with TTX or tetracaine. Toxin-induced persistant current is very slowly reversible with repeated wash steps over 30 minutes. In vivo, shallow intraplantar injection in mice causes immediate, long-lasting and near-maximal nocifensive behaviors, which decrease with coinjection of TTX. When tested on insects, causes paralysis but not mortality at high doses. The chain is Glycyl-poneratoxin from Paraponera clavata (Bullet ant).